Reading from the N-terminus, the 364-residue chain is Mannonate dehydratase (364 aa).

The protein belongs to the mannonate dehydratase family. Requires Fe(2+) as cofactor. The cofactor is Mn(2+).

The catalysed reaction is D-mannonate = 2-dehydro-3-deoxy-D-gluconate + H2O. It functions in the pathway carbohydrate metabolism; pentose and glucuronate interconversion. Functionally, catalyzes the dehydration of D-mannonate. The polypeptide is Mannonate dehydratase (Endomicrobium trichonymphae).